The following is a 31-amino-acid chain: Photosystem II reaction center protein T (31 aa).

Residues 3 to 23 traverse the membrane as a helical segment; it reads SVAYILVLTMTLAVLFFAIAF.

The protein belongs to the PsbT family. In terms of assembly, PSII is composed of 1 copy each of membrane proteins PsbA, PsbB, PsbC, PsbD, PsbE, PsbF, PsbH, PsbI, PsbJ, PsbK, PsbL, PsbM, PsbT, PsbX, PsbY, PsbZ, Psb30/Ycf12, peripheral proteins PsbO, CyanoQ (PsbQ), PsbU, PsbV and a large number of cofactors. It forms dimeric complexes.

Its subcellular location is the cellular thylakoid membrane. Functionally, found at the monomer-monomer interface of the photosystem II (PS II) dimer, plays a role in assembly and dimerization of PSII. PSII is a light-driven water plastoquinone oxidoreductase, using light energy to abstract electrons from H(2)O, generating a proton gradient subsequently used for ATP formation. This is Photosystem II reaction center protein T from Rippkaea orientalis (strain PCC 8801 / RF-1) (Cyanothece sp. (strain PCC 8801)).